A 432-amino-acid polypeptide reads, in one-letter code: UDP-N-acetylglucosamine 1-carboxyvinyltransferase (432 aa).

22-23 (KN) contacts phosphoenolpyruvate. A UDP-N-acetyl-alpha-D-glucosamine-binding site is contributed by Arg102. Catalysis depends on Cys126, which acts as the Proton donor. A 2-(S-cysteinyl)pyruvic acid O-phosphothioketal modification is found at Cys126. UDP-N-acetyl-alpha-D-glucosamine contacts are provided by residues 131–135 (RPVDL), Asp317, and Ile339.

The protein belongs to the EPSP synthase family. MurA subfamily.

It is found in the cytoplasm. The catalysed reaction is phosphoenolpyruvate + UDP-N-acetyl-alpha-D-glucosamine = UDP-N-acetyl-3-O-(1-carboxyvinyl)-alpha-D-glucosamine + phosphate. The protein operates within cell wall biogenesis; peptidoglycan biosynthesis. In terms of biological role, cell wall formation. Adds enolpyruvyl to UDP-N-acetylglucosamine. This is UDP-N-acetylglucosamine 1-carboxyvinyltransferase from Rhodospirillum centenum (strain ATCC 51521 / SW).